A 429-amino-acid polypeptide reads, in one-letter code: Serine hydroxymethyltransferase (429 aa).

120 to 122 (GHI) contacts (6S)-5,6,7,8-tetrahydrofolate. K226 carries the N6-(pyridoxal phosphate)lysine modification.

It belongs to the SHMT family. As to quaternary structure, homodimer. It depends on pyridoxal 5'-phosphate as a cofactor.

Its subcellular location is the cytoplasm. Its pathway is amino-acid biosynthesis; glycine biosynthesis; glycine from L-serine: step 1/1. Its function is as follows. Catalyzes the reversible interconversion of serine and glycine with a modified folate serving as the one-carbon carrier. Also exhibits a pteridine-independent aldolase activity toward beta-hydroxyamino acids, producing glycine and aldehydes, via a retro-aldol mechanism. The chain is Serine hydroxymethyltransferase from Pyrobaculum arsenaticum (strain DSM 13514 / JCM 11321 / PZ6).